A 243-amino-acid chain; its full sequence is Juxtaposed with another zinc finger protein 1 (243 aa).

Residues 12-37 (NTCRFGGCGLHFPTLADLIEHIEDNH) form a C2H2-type 1 zinc finger. The tract at residues 39-79 (DTDPRVLEKQELQQPTYVALSYINRFMTDAARREQESLKKK) is required for interaction with NR2C2. Residues 89–108 (SSSVSRGNVSTPPRHSSGSL) are compositionally biased toward polar residues. The interval 89–151 (SSSVSRGNVS…SDSDESWTTE (63 aa)) is disordered. Residues T109 and T113 each carry the phosphothreonine modification. The segment covering 118–130 (PSSSFRSSTPTGS) has biased composition (low complexity). Over residues 131–148 (EYDEEEVDYEESDSDESW) the composition is skewed to acidic residues. The C2H2-type 2 zinc finger occupies 173-198 (FACPVPGCKKRYKNVNGIKYHAKNGH). The C2H2-type 3; degenerate zinc-finger motif lies at 208-230 (FKCRCGKSYKTAQGLRHHTINFH).

In terms of assembly, interacts with NR2C2 (via ligand-binding region). As to expression, highest expression in testis with moderate levels in colon, placenta, prostate and ovary and low levels in brain, spleen, liver and small intestine.

The protein resides in the nucleus. Functionally, acts as a transcriptional corepressor of orphan nuclear receptor NR2C2. Inhibits expression of the gluconeogenesis enzyme PCK2 through inhibition of NR2C2 activity. Also involved in transcriptional activation of NAMPT by promoting expression of PPARA and PPARD. Plays a role in lipid metabolism by suppressing lipogenesis, increasing lipolysis and decreasing lipid accumulation in adipose tissue. Plays a role in glucose homeostasis by improving glucose metabolism and insulin sensitivity. This chain is Juxtaposed with another zinc finger protein 1, found in Homo sapiens (Human).